The sequence spans 489 residues: uncharacterized protein (489 aa).

The next 12 helical transmembrane spans lie at 14 to 34, 36 to 56, 100 to 120, 127 to 147, 158 to 178, 203 to 223, 241 to 261, 286 to 306, 344 to 364, 380 to 400, 419 to 439, and 449 to 469; these read LLFVVNYIAGFGFIATAISLF, LGPFSWLIFLLVSLVSLIVTL, IIGPLSAATAPLFILNSFSGI, LVNTWILIAIGFSFYVLLAFI, LIALFASVKWIVILSALIVAI, EISFAQIATVFITFFYSYAGV, ILIVSFIAVFLFYFIGIIILN, AAGLGTLIFYGVGALFNNVST, IWFTFGTTLIAMTLLVFIPLV, VGSAATLLQYIFVFFIIFKFI, LFCLGTIVIVLMLLVYLFPVI, and HTLTIVLYGVLSLIGLVLFLL.

To M.genitalium MG226.

It is found in the cell membrane. This is an uncharacterized protein from Mycoplasma genitalium (strain ATCC 33530 / DSM 19775 / NCTC 10195 / G37) (Mycoplasmoides genitalium).